The chain runs to 590 residues: Aspartate--tRNA(Asp/Asn) ligase (590 aa).

Glu178 is an L-aspartate binding site. An aspartate region spans residues 202-205 (QIYK). L-aspartate is bound at residue Arg224. ATP-binding positions include 224–226 (RDE) and Gln233. Residue His453 coordinates L-aspartate. Glu487 lines the ATP pocket. Arg494 serves as a coordination point for L-aspartate. 539 to 542 (GLDR) is a binding site for ATP.

This sequence belongs to the class-II aminoacyl-tRNA synthetase family. Type 1 subfamily. Homodimer.

Its subcellular location is the cytoplasm. The catalysed reaction is tRNA(Asx) + L-aspartate + ATP = L-aspartyl-tRNA(Asx) + AMP + diphosphate. Aspartyl-tRNA synthetase with relaxed tRNA specificity since it is able to aspartylate not only its cognate tRNA(Asp) but also tRNA(Asn). Reaction proceeds in two steps: L-aspartate is first activated by ATP to form Asp-AMP and then transferred to the acceptor end of tRNA(Asp/Asn). The chain is Aspartate--tRNA(Asp/Asn) ligase from Treponema denticola (strain ATCC 35405 / DSM 14222 / CIP 103919 / JCM 8153 / KCTC 15104).